The chain runs to 431 residues: REST corepressor 1 (431 aa).

The span at 1–10 (MIEKGAEISG) shows a compositional bias: basic and acidic residues. A disordered region spans residues 1–53 (MIEKGAEISGKRRGRNNAANSKSLGTNVNGSNSWEEGSSSSSSDDEPGGGGMR). Residues 17–28 (NAANSKSLGTNV) show a composition bias toward polar residues. The span at 29-42 (NGSNSWEEGSSSSS) shows a compositional bias: low complexity. An ELM2 domain is found at 50–135 (GGMRVGLQYQ…KSLADLLNFT (86 aa)). Positions 136-187 (PFPDEWTVEDRVLFEQAFSFHGKTFHRIQQMLPDKSIASLVKFYYSWKKTRS) constitute an SANT 1 domain. The disordered stretch occupies residues 190–262 (SVMDRHARKQ…NRAKRKPPNG (73 aa)). The span at 224-242 (EQPKEAKKEVPKNDTVPHI) shows a compositional bias: basic and acidic residues. Positions 267-314 (QEDVEAVSANANAATTVLRQLDMELVSIKRQIQNIKQTNSAFKEKLQG) form a coiled coil. The 52-residue stretch at 327–378 (KFNARWTTEEQLLAVQAIRMYGRDFQAISDVIGNKSVVQVKNFFVNYRRRFN) folds into the SANT 2 domain.

This sequence belongs to the CoREST family. As to quaternary structure, component of a BHC histone deacetylase complex that contains KDM1A. As to expression, expressed in territories in which neurogenesis takes place.

Its subcellular location is the nucleus. In terms of biological role, essential component of the BHC complex, a corepressor complex that represses transcription of neuron-specific genes in non-neuronal cells. The BHC complex is recruited at RE1/NRSE sites by REST and acts by deacetylating and demethylating specific sites on histones, thereby acting as a chromatin modifier. In the BHC complex, it serves as a molecular beacon for the recruitment of molecular machinery that imposes silencing across a chromosomal interval. Plays a central role in demethylation of Lys-4 of histone H3 by promoting demethylase activity of KDM1A on core histones and nucleosomal substrates. This chain is REST corepressor 1 (rcor1), found in Xenopus laevis (African clawed frog).